A 509-amino-acid chain; its full sequence is ATP synthase subunit beta (509 aa).

The disordered stretch occupies residues 1–28; sequence MAKAATPKETAAAKKPAAPKKAASAKTA. 187-194 provides a ligand contact to ATP; that stretch reads GGAGVGKT.

It belongs to the ATPase alpha/beta chains family. As to quaternary structure, F-type ATPases have 2 components, CF(1) - the catalytic core - and CF(0) - the membrane proton channel. CF(1) has five subunits: alpha(3), beta(3), gamma(1), delta(1), epsilon(1). CF(0) has three main subunits: a(1), b(2) and c(9-12). The alpha and beta chains form an alternating ring which encloses part of the gamma chain. CF(1) is attached to CF(0) by a central stalk formed by the gamma and epsilon chains, while a peripheral stalk is formed by the delta and b chains.

It is found in the cell inner membrane. It catalyses the reaction ATP + H2O + 4 H(+)(in) = ADP + phosphate + 5 H(+)(out). In terms of biological role, produces ATP from ADP in the presence of a proton gradient across the membrane. The catalytic sites are hosted primarily by the beta subunits. The chain is ATP synthase subunit beta from Sinorhizobium medicae (strain WSM419) (Ensifer medicae).